The primary structure comprises 1187 residues: uncharacterized protein (1187 aa).

Disordered regions lie at residues 302–405 (QKSQ…KPVG), 419–451 (QAFSPLLSSAGPGSPAAETKTEETTLGHGRASK), 511–551 (KAPG…LRLE), 1095–1134 (KSQRTPQGEQSRNMWAGLLSPEPGQSGDTEEVRGTPKLPD), and 1148–1187 (PHLPKQSKASRPTGGSFSSEGTGSQTSLEDSPHTSPPASL). Positions 321 to 333 (LPLSGPAGAPPLG) are enriched in low complexity. The segment covering 352 to 361 (SRRKARHKAS) has biased composition (basic residues). 2 stretches are compositionally biased toward low complexity: residues 422–435 (SPLLSSAGPGSPAA) and 517–534 (GTTLPTTSGSGPLSGEPP). The segment covering 1096 to 1107 (SQRTPQGEQSRN) has biased composition (polar residues). The span at 1160 to 1174 (TGGSFSSEGTGSQTS) shows a compositional bias: low complexity.

This is an uncharacterized protein from Mus musculus (Mouse).